The chain runs to 68 residues: Putative membrane protein insertion efficiency factor (68 aa).

This sequence belongs to the UPF0161 family.

The protein localises to the cell inner membrane. Could be involved in insertion of integral membrane proteins into the membrane. In Hydrogenobaculum sp. (strain Y04AAS1), this protein is Putative membrane protein insertion efficiency factor.